We begin with the raw amino-acid sequence, 157 residues long: Arginine repressor (157 aa).

This sequence belongs to the ArgR family.

It localises to the cytoplasm. It participates in amino-acid biosynthesis; L-arginine biosynthesis [regulation]. Regulates arginine biosynthesis genes. The chain is Arginine repressor from Bacteroides thetaiotaomicron (strain ATCC 29148 / DSM 2079 / JCM 5827 / CCUG 10774 / NCTC 10582 / VPI-5482 / E50).